A 246-amino-acid chain; its full sequence is Breast cancer metastasis-suppressor 1 (246 aa).

Positions 1 to 57 are disordered; sequence MPVQPPSKDTEEMEAEGDSAAEMNGEEEESEEERSGSQTESEEESSEMDDEDYERRR. 2 stretches are compositionally biased toward acidic residues: residues 11–32 and 40–52; these read EEME…ESEE and ESEE…DDED. Residues 51 to 98 are a coiled coil; that stretch reads EDYERRRSECVSEMLDLEKQFSELKEKLFRERLSQLRLRLEEVGAERA. Residues Lys184 and Lys242 each participate in a glycyl lysine isopeptide (Lys-Gly) (interchain with G-Cter in SUMO2) cross-link.

The protein belongs to the BRMS1 family. As to quaternary structure, homohexamer (Potential). Interacts with SNX6, HDAC1 and RELA. Interacts with ARID4A. Identified in mSin3A corepressor complexes together with SIN3A, SIN3B, RBBP4, RBBP7, SAP30, SUDS3, ARID4A, HDAC1 and HDAC2. Interacts with SPOP; this recruits the protein to a ubiquitin ligase complex containing SPOP and CUL3. In terms of processing, ubiquitinated by a cullin-RING-based BCR (BTB-CUL3-RBX1) E3 ubiquitin-protein ligase complex containing SPOP, leading to proteasomal degradation. In terms of tissue distribution, expression levels are higher in term placentas than in early placentas. Low levels of expression observed in normal pregnancies and in molar pregnancies.

It is found in the nucleus. The protein resides in the cytoplasm. Its function is as follows. Transcriptional repressor. Down-regulates transcription activation by NF-kappa-B by promoting the deacetylation of RELA at 'Lys-310'. Promotes HDAC1 binding to promoter regions. Down-regulates expression of anti-apoptotic genes that are controlled by NF-kappa-B. Promotes apoptosis in cells that have inadequate adherence to a substrate, a process called anoikis, and may thereby inhibit metastasis. May be a mediator of metastasis suppression in breast carcinoma. The sequence is that of Breast cancer metastasis-suppressor 1 (BRMS1) from Homo sapiens (Human).